We begin with the raw amino-acid sequence, 1345 residues long: DNA-directed RNA polymerase subunit beta (1345 aa).

Belongs to the RNA polymerase beta chain family. As to quaternary structure, the RNAP catalytic core consists of 2 alpha, 1 beta, 1 beta' and 1 omega subunit. When a sigma factor is associated with the core the holoenzyme is formed, which can initiate transcription.

It carries out the reaction RNA(n) + a ribonucleoside 5'-triphosphate = RNA(n+1) + diphosphate. Functionally, DNA-dependent RNA polymerase catalyzes the transcription of DNA into RNA using the four ribonucleoside triphosphates as substrates. In Shewanella sp. (strain MR-4), this protein is DNA-directed RNA polymerase subunit beta.